Reading from the N-terminus, the 937-residue chain is Aconitate hydratase A (937 aa).

Residues 410-450 form a disordered region; that stretch reads MANEGGFQPGSTSDLDNYNASWPGEGESAAANAEGRPSNPV. The segment covering 418-429 has biased composition (polar residues); it reads PGSTSDLDNYNA. The span at 433–444 shows a compositional bias: low complexity; the sequence is GEGESAAANAEG. Positions 475, 541, and 544 each coordinate [4Fe-4S] cluster.

Belongs to the aconitase/IPM isomerase family. In terms of assembly, monomer. [4Fe-4S] cluster is required as a cofactor.

It carries out the reaction citrate = D-threo-isocitrate. The catalysed reaction is (2S,3R)-3-hydroxybutane-1,2,3-tricarboxylate = 2-methyl-cis-aconitate + H2O. It functions in the pathway carbohydrate metabolism; tricarboxylic acid cycle; isocitrate from oxaloacetate: step 2/2. It participates in organic acid metabolism; propanoate degradation. In terms of biological role, involved in the catabolism of short chain fatty acids (SCFA) via the tricarboxylic acid (TCA)(acetyl degradation route) and probably via the 2-methylcitrate cycle I (propionate degradation route). Catalyzes the reversible isomerization of citrate to isocitrate via cis-aconitate. Could catalyze the hydration of 2-methyl-cis-aconitate to yield (2R,3S)-2-methylisocitrate. The apo form of AcnA functions as a RNA-binding regulatory protein. In Corynebacterium efficiens (strain DSM 44549 / YS-314 / AJ 12310 / JCM 11189 / NBRC 100395), this protein is Aconitate hydratase A (acn).